The following is a 576-amino-acid chain: 60 kDa heat shock protein homolog 2, mitochondrial (576 aa).

Residues 1–61 (MMRMFRYTNT…AVTMGPKGRN (61 aa)) constitute a mitochondrion transit peptide.

This sequence belongs to the chaperonin (HSP60) family. As to expression, first detectable expression is seen in the posterior part of the dorsal tracheal trunk at stage 14-15, which marks the beginning of terminal tracheation. In the larval gut, expression in proventriculus is stronger than in midgut and hindgut. Malpighian tubules shows low expression and late third instar larval imaginal disks and brain showed moderate expression. In larval ovary and testis, expression is strong in the posterior region.

The protein localises to the mitochondrion matrix. In terms of biological role, prevents misfolding and promotes the refolding and proper assembly of unfolded polypeptides generated under stress conditions. Essential for proper development of trachea, spermatogonia and spermatocytes. This Drosophila melanogaster (Fruit fly) protein is 60 kDa heat shock protein homolog 2, mitochondrial (Hsp60C).